Here is a 359-residue protein sequence, read N- to C-terminus: DNA integrity scanning protein DisA (359 aa).

Residues 10–148 (ELDLLDIVQF…GNRRYTLKDI (139 aa)) form the DAC domain. ATP is bound by residues G77, L95, and 108–112 (MRHRT).

It belongs to the DisA family. In terms of assembly, homooctamer. Mg(2+) serves as cofactor.

It catalyses the reaction 2 ATP = 3',3'-c-di-AMP + 2 diphosphate. Its function is as follows. Participates in a DNA-damage check-point that is active prior to asymmetric division when DNA is damaged. DisA forms globular foci that rapidly scan along the chromosomes during sporulation, searching for lesions. When a lesion is present, DisA pauses at the lesion site. This triggers a cellular response that culminates in a temporary block in sporulation initiation. Also has diadenylate cyclase activity, catalyzing the condensation of 2 ATP molecules into cyclic di-AMP (c-di-AMP). c-di-AMP acts as a signaling molecule that couples DNA integrity with progression of sporulation. The rise in c-di-AMP level generated by DisA while scanning the chromosome, operates as a positive signal that advances sporulation; upon encountering a lesion, the DisA focus arrests at the damaged site and halts c-di-AMP synthesis. This chain is DNA integrity scanning protein DisA, found in Bacillus pumilus (strain SAFR-032).